The sequence spans 64 residues: Chassatide C7 (64 aa).

The propeptide at 1–35 is removed in mature form; sequence VLVASLVMLEAQSSDTIQVPDWGKRLLMNHDSNRV. 3 cysteine pairs are disulfide-bonded: C39–C55, C43–C57, and C48–C62.

In terms of tissue distribution, expressed in fruit, pedicel, root and stem but not in leaf (at protein level).

In terms of biological role, probably participates in a plant defense mechanism. Active against E.coli ATTC25922 but not against S.aureus ATCC 12600 or S.epidermidis ATCC 14990. Has cytotoxic and hemolytic activity. This chain is Chassatide C7, found in Chassalia chartacea (Chassalia curviflora).